The chain runs to 279 residues: CDP-paratose synthase (279 aa).

The active-site Proton acceptor is Tyr-115.

Belongs to the NAD(P)-dependent epimerase/dehydratase family.

The enzyme catalyses CDP-alpha-D-paratose + NADP(+) = CDP-4-dehydro-3,6-dideoxy-alpha-D-glucose + NADPH + H(+). Its pathway is nucleotide-sugar biosynthesis; CDP-3,6-dideoxy-D-mannose biosynthesis; CDP-3,6-dideoxy-D-mannose from CTP and alpha-D-glucose 1-phosphate: step 4/5. Catalyzes synthesis of paratose and tyvelose, unusual 3,6-dideoxyhexose sugars that form part of the O-antigen in the lipopolysaccharides of several enteric bacteria. This Salmonella typhi protein is CDP-paratose synthase (rfbS).